A 119-amino-acid chain; its full sequence is MSIRTERVASLLQQELGAILQKELPRSGPIITVVEVKITADLSIARAYVSIIGTPEEQQEAMALLQDKTKSIRKILSSKIRHHFRRIPELEFHEDHLYERANRIEQLLSGVRKSSAENV.

Belongs to the RbfA family. As to quaternary structure, monomer. Binds 30S ribosomal subunits, but not 50S ribosomal subunits or 70S ribosomes.

It localises to the cytoplasm. Its function is as follows. One of several proteins that assist in the late maturation steps of the functional core of the 30S ribosomal subunit. Associates with free 30S ribosomal subunits (but not with 30S subunits that are part of 70S ribosomes or polysomes). Required for efficient processing of 16S rRNA. May interact with the 5'-terminal helix region of 16S rRNA. This Pelodictyon phaeoclathratiforme (strain DSM 5477 / BU-1) protein is Ribosome-binding factor A.